A 633-amino-acid chain; its full sequence is Bifunctional enzyme CysN/CysC (633 aa).

Residues 1–463 (MSHQSDLISE…REERAGRFGQ (463 aa)) form a sulfate adenylyltransferase region. The 220-residue stretch at 22-241 (KELLRFLTCG…TVEIAADRNL (220 aa)) folds into the tr-type G domain. The G1 stretch occupies residues 31–38 (GNVDDGKS). 31–38 (GNVDDGKS) serves as a coordination point for GTP. The G2 stretch occupies residues 89–93 (GITID). Positions 110 to 113 (DTPG) are G3. GTP is bound by residues 110–114 (DTPGH) and 165–168 (NKMD). Residues 165 to 168 (NKMD) form a G4 region. The G5 stretch occupies residues 204-206 (SAL). Residues 464–633 (QPATVLFSGL…LDLLRERQAI (170 aa)) are adenylyl-sulfate kinase. An ATP-binding site is contributed by 472–479 (GLSGAGKS).

This sequence in the C-terminal section; belongs to the APS kinase family. The protein in the N-terminal section; belongs to the TRAFAC class translation factor GTPase superfamily. Classic translation factor GTPase family. CysN/NodQ subfamily. In terms of assembly, heterodimer composed of CysD, the smaller subunit, and CysNC.

The enzyme catalyses sulfate + ATP + H(+) = adenosine 5'-phosphosulfate + diphosphate. It carries out the reaction adenosine 5'-phosphosulfate + ATP = 3'-phosphoadenylyl sulfate + ADP + H(+). The protein operates within sulfur metabolism; hydrogen sulfide biosynthesis; sulfite from sulfate: step 1/3. Its pathway is sulfur metabolism; hydrogen sulfide biosynthesis; sulfite from sulfate: step 2/3. Its function is as follows. With CysD forms the ATP sulfurylase (ATPS) that catalyzes the adenylation of sulfate producing adenosine 5'-phosphosulfate (APS) and diphosphate, the first enzymatic step in sulfur assimilation pathway. APS synthesis involves the formation of a high-energy phosphoric-sulfuric acid anhydride bond driven by GTP hydrolysis by CysN coupled to ATP hydrolysis by CysD. APS kinase catalyzes the synthesis of activated sulfate. In Pseudomonas aeruginosa (strain ATCC 15692 / DSM 22644 / CIP 104116 / JCM 14847 / LMG 12228 / 1C / PRS 101 / PAO1), this protein is Bifunctional enzyme CysN/CysC (cysNC).